A 350-amino-acid chain; its full sequence is Fe(3+) ions import ATP-binding protein FbpC (350 aa).

Residues Leu-4–Leu-236 enclose the ABC transporter domain. Gly-36–Thr-43 lines the ATP pocket.

This sequence belongs to the ABC transporter superfamily. Fe(3+) ion importer (TC 3.A.1.10) family. As to quaternary structure, the complex is composed of two ATP-binding proteins (FbpC), two transmembrane proteins (FbpB) and a solute-binding protein (FbpA).

The protein resides in the cell inner membrane. The enzyme catalyses Fe(3+)(out) + ATP + H2O = Fe(3+)(in) + ADP + phosphate + H(+). In terms of biological role, part of the ABC transporter complex FbpABC involved in Fe(3+) ions import. Responsible for energy coupling to the transport system. The sequence is that of Fe(3+) ions import ATP-binding protein FbpC from Pseudomonas fluorescens (strain Pf0-1).